A 240-amino-acid polypeptide reads, in one-letter code: UDP-2,3-diacylglucosamine hydrolase (240 aa).

Mn(2+) is bound by residues Asp-9, His-11, Asp-43, Asn-81, and His-116. Position 81–82 (Asn-81–Arg-82) interacts with substrate. The substrate site is built by Asp-124, Ser-162, Lys-166, Lys-169, and His-197. 2 residues coordinate Mn(2+): His-197 and His-199.

This sequence belongs to the LpxH family. It depends on Mn(2+) as a cofactor.

It localises to the cell inner membrane. It catalyses the reaction UDP-2-N,3-O-bis[(3R)-3-hydroxytetradecanoyl]-alpha-D-glucosamine + H2O = 2-N,3-O-bis[(3R)-3-hydroxytetradecanoyl]-alpha-D-glucosaminyl 1-phosphate + UMP + 2 H(+). The protein operates within glycolipid biosynthesis; lipid IV(A) biosynthesis; lipid IV(A) from (3R)-3-hydroxytetradecanoyl-[acyl-carrier-protein] and UDP-N-acetyl-alpha-D-glucosamine: step 4/6. Hydrolyzes the pyrophosphate bond of UDP-2,3-diacylglucosamine to yield 2,3-diacylglucosamine 1-phosphate (lipid X) and UMP by catalyzing the attack of water at the alpha-P atom. Involved in the biosynthesis of lipid A, a phosphorylated glycolipid that anchors the lipopolysaccharide to the outer membrane of the cell. The protein is UDP-2,3-diacylglucosamine hydrolase of Neisseria meningitidis serogroup C (strain 053442).